A 646-amino-acid polypeptide reads, in one-letter code: Beta-mannosyltransferase 6 (646 aa).

Residues 1–25 (MGNYKPSIKQYVVTVKAIKSSQFGR) lie on the Cytoplasmic side of the membrane. A helical transmembrane segment spans residues 26-46 (LGICAVVLLFVLGYPFYFISN). Residues 47-646 (NPFDTSIRYQ…LTGGWLPSHN (600 aa)) lie on the Extracellular side of the membrane. N-linked (GlcNAc...) asparagine glycans are attached at residues Asn62, Asn81, Asn103, Asn117, Asn127, Asn132, Asn146, Asn334, and Asn393.

This sequence belongs to the BMT family.

It is found in the membrane. Its function is as follows. Beta-mannosyltransferase involved in cell wall biosynthesis. Required for beta-1,2-mannose transfer on phospholipomannan. Required for pro-inflammatory response in macrophages through phospholipomannan-induced TNF-alpha production. This Candida albicans (strain SC5314 / ATCC MYA-2876) (Yeast) protein is Beta-mannosyltransferase 6 (BMT6).